The following is a 79-amino-acid chain: Conotoxin 1 (79 aa).

The first 22 residues, 1 to 22, serve as a signal peptide directing secretion; that stretch reads MKLTCVLIITVLFLTASQLITA. Positions 23–46 are excised as a propeptide; it reads DYSRDQRQYRAVRLGDEMRTFKGA. 3 disulfides stabilise this stretch: Cys49-Cys62, Cys56-Cys67, and Cys61-Cys77.

This sequence belongs to the conotoxin O1 superfamily. Expressed by the venom duct.

It localises to the secreted. This chain is Conotoxin 1, found in Conus vexillum (Flag cone).